The following is a 201-amino-acid chain: Putative Ras-related protein Rab-1C (201 aa).

GTP is bound by residues 15-23, 33-40, and 63-67; these read GDSGVGKSC, YTESYIST, and DTAGQ. An Effector region motif is present at residues 37–45; sequence YISTIGVDF. At Ser-76 the chain carries (Microbial infection) O-(2-cholinephosphoryl)serine. GTP is bound by residues 121–124 and 151–153; these read NKSD and SAK. The segment at 174-201 is disordered; that stretch reads GPGAASGGERPNLKIDSTPVKPAGGGCC. Residues Cys-200 and Cys-201 are each lipidated (S-geranylgeranyl cysteine).

The protein belongs to the small GTPase superfamily. Rab family. In terms of processing, (Microbial infection) Phosphocholinated at Ser-76 by L.pneumophila AnkX, leading to displace GDP dissociation inhibitors (GDI). Both GDP-bound and GTP-bound forms can be phosphocholinated. Dephosphocholinated by L.pneumophila Lem3, restoring accessibility to L.pneumophila GTPase effector LepB. (Microbial infection) Glycosylated by S.typhimurium protein Ssek3: arginine GlcNAcylation prevents GTPase activity, thereby disrupting vesicular protein transport from the endoplasmic reticulum (ER) to the Golgi compartment.

Its subcellular location is the membrane. It is found in the cytoplasm. The enzyme catalyses GTP + H2O = GDP + phosphate + H(+). Protein transport. Probably involved in vesicular traffic. This Homo sapiens (Human) protein is Putative Ras-related protein Rab-1C (RAB1C).